We begin with the raw amino-acid sequence, 557 residues long: Leucine-rich glioma-inactivated protein 1 (557 aa).

A signal peptide spans 1 to 34 (MESERSKRMGNACIPLKRIAYFLCLLSALLLTEG). The LRRNT domain maps to 35–72 (KKPAKPKCPAVCTCTKDNALCENARSIPRTVPPDVISL). LRR repeat units lie at residues 92-113 (SLQLLLFTSNSFDVISDDAFIG), 116-137 (HLEYLFIENNNIKSISRHTFRG), and 140-161 (SLIHLSLANNNLQTLPKDIFKG). Residues 173-223 (NSFNCDCKLKWLVEWLGHTNATVEDIYCEGPPEYKKRKINSLSSKDFDCII) enclose the LRRCT domain. Asn-192 is a glycosylation site (N-linked (GlcNAc...) asparagine). 7 EAR repeats span residues 225–267 (EFAK…EWDH), 271–313 (TFRN…KRDS), 317–364 (KFIK…KWNG), 366–415 (GFYS…QWNK), 419–462 (SFTN…KWGG), 464–506 (SFQD…NWDA), and 510–552 (KFVK…KHVI). An N-linked (GlcNAc...) asparagine glycan is attached at Asn-277. N-linked (GlcNAc...) asparagine glycosylation occurs at Asn-422.

Oligomer. Interacts with KCNA1 within a complex containing KCNA1, KCNA4 and KCNAB1. Part of a complex containing ADAM22, DLG4/PSD95 and CACNG2 (stargazin). Can bind to ADAM11 and ADAM23. Glycosylated.

It localises to the secreted. The protein localises to the synapse. The protein resides in the cytoplasm. Its function is as follows. Regulates voltage-gated potassium channels assembled from KCNA1, KCNA4 and KCNAB1. It slows down channel inactivation by precluding channel closure mediated by the KCNAB1 subunit. Ligand for ADAM22 that positively regulates synaptic transmission mediated by AMPA-type glutamate receptors. Plays a role in suppressing the production of MMP1/3 through the phosphatidylinositol 3-kinase/ERK pathway. This is Leucine-rich glioma-inactivated protein 1 (LGI1) from Pan troglodytes (Chimpanzee).